Consider the following 443-residue polypeptide: Glutamyl-tRNA reductase (443 aa).

Residues T49–R52, S109, E114–Q116, and Q120 contribute to the substrate site. The active-site Nucleophile is the C50. G189–G194 contributes to the NADP(+) binding site.

This sequence belongs to the glutamyl-tRNA reductase family. In terms of assembly, homodimer.

It catalyses the reaction (S)-4-amino-5-oxopentanoate + tRNA(Glu) + NADP(+) = L-glutamyl-tRNA(Glu) + NADPH + H(+). It functions in the pathway porphyrin-containing compound metabolism; protoporphyrin-IX biosynthesis; 5-aminolevulinate from L-glutamyl-tRNA(Glu): step 1/2. Catalyzes the NADPH-dependent reduction of glutamyl-tRNA(Glu) to glutamate 1-semialdehyde (GSA). The sequence is that of Glutamyl-tRNA reductase from Mycobacteroides abscessus (strain ATCC 19977 / DSM 44196 / CCUG 20993 / CIP 104536 / JCM 13569 / NCTC 13031 / TMC 1543 / L948) (Mycobacterium abscessus).